The chain runs to 390 residues: DNA replication and repair protein RecF (390 aa).

30-37 contacts ATP; sequence GDNAQGKS.

It belongs to the RecF family.

The protein resides in the cytoplasm. In terms of biological role, the RecF protein is involved in DNA metabolism; it is required for DNA replication and normal SOS inducibility. RecF binds preferentially to single-stranded, linear DNA. It also seems to bind ATP. The polypeptide is DNA replication and repair protein RecF (Trichodesmium erythraeum (strain IMS101)).